Reading from the N-terminus, the 282-residue chain is Pantothenate synthetase (282 aa).

30–37 (MGALHAGH) contributes to the ATP binding site. His-37 serves as the catalytic Proton donor. Gln-61 is a binding site for (R)-pantoate. Residue Gln-61 coordinates beta-alanine. Residue 147–150 (GEKD) coordinates ATP. Gln-153 serves as a coordination point for (R)-pantoate. Residues Val-176 and 184–187 (LSSR) contribute to the ATP site.

It belongs to the pantothenate synthetase family. Homodimer.

It localises to the cytoplasm. It carries out the reaction (R)-pantoate + beta-alanine + ATP = (R)-pantothenate + AMP + diphosphate + H(+). It participates in cofactor biosynthesis; (R)-pantothenate biosynthesis; (R)-pantothenate from (R)-pantoate and beta-alanine: step 1/1. In terms of biological role, catalyzes the condensation of pantoate with beta-alanine in an ATP-dependent reaction via a pantoyl-adenylate intermediate. This Bacteroides thetaiotaomicron (strain ATCC 29148 / DSM 2079 / JCM 5827 / CCUG 10774 / NCTC 10582 / VPI-5482 / E50) protein is Pantothenate synthetase.